Consider the following 251-residue polypeptide: Endonuclease NucS (251 aa).

A compositionally biased stretch (basic and acidic residues) spans 230 to 240 (LEPPKKGNEKR). Residues 230–251 (LEPPKKGNEKRSKQKTLDFFTP) are disordered.

The protein belongs to the NucS endonuclease family. In terms of assembly, homodimer. Interacts with PCNA.

Its subcellular location is the cytoplasm. Its activity is regulated as follows. Activity is modulated by PCNA. PCNA increases the binding affinity of NucS towards ssDNA as well as branched DNA substrates carrying either 3' or 5' flaps. PCNA is also required for optimal loading of NucS on its substrates and to direct activity towards ss/dsDNA junction. Cleaves both 3' and 5' ssDNA extremities of branched DNA structures. Binds to ssDNA. The chain is Endonuclease NucS from Pyrococcus abyssi (strain GE5 / Orsay).